An 85-amino-acid polypeptide reads, in one-letter code: Large ribosomal subunit protein bL31B (85 aa).

Belongs to the bacterial ribosomal protein bL31 family. Type B subfamily. Part of the 50S ribosomal subunit.

The sequence is that of Large ribosomal subunit protein bL31B from Kocuria rhizophila (strain ATCC 9341 / DSM 348 / NBRC 103217 / DC2201).